Consider the following 657-residue polypeptide: Methionine--tRNA ligase (657 aa).

Residues 13–23 (YYPSGNLHIGH) carry the 'HIGH' region motif. The short motif at 308–312 (KMSKS) is the 'KMSKS' region element. K311 lines the ATP pocket. A tRNA-binding domain is found at 557–657 (DFDKVEIKAA…SAIPNGAVIK (101 aa)).

This sequence belongs to the class-I aminoacyl-tRNA synthetase family. MetG type 2B subfamily. Homodimer.

Its subcellular location is the cytoplasm. The enzyme catalyses tRNA(Met) + L-methionine + ATP = L-methionyl-tRNA(Met) + AMP + diphosphate. Its function is as follows. Is required not only for elongation of protein synthesis but also for the initiation of all mRNA translation through initiator tRNA(fMet) aminoacylation. This chain is Methionine--tRNA ligase, found in Staphylococcus aureus (strain Mu50 / ATCC 700699).